The sequence spans 429 residues: MPATILIGAQWGDEGKGKATDLLAKDIDYVVKFNGGNNAGHTVVIGGDKYVLHLLPSGILNENVVPVIANGVVINPEVLFDEIATLNSRGVNTDKLVISANAHIIAPFHRTIDLVTERFLGKRQLGTTGRGIGPTYADKINRIGIRVQDLFDKSVLRQKIEGSLSNKNHMLVKVFNRRSVSVTEMLDYLLSFAERMRPMIADTSLLLNNALDCGKHVLFEGGQATMLDVDHGSYPFVTSSNATVGGAITGAGIGPTRVNKVIGVAKSYTTRVGAGPFPTELHDEYGEWLQKRGYEVGATTGRKRRCGWFDGVVARYATRINGITDYVLTKLDVLTGLDRIPICVGYKVGDSVFREMPVSQSDFHHAVPIYEDLPGWQCNISECESFDSLPPEARGYVLALEDLIKARISVIGTGPERENIIIRHPLGIF.

Residues 12–18 (GDEGKGK) and 40–42 (GHT) each bind GTP. Residue aspartate 13 is the Proton acceptor of the active site. Aspartate 13 and glycine 40 together coordinate Mg(2+). IMP contacts are provided by residues 13–16 (DEGK), 38–41 (NAGH), threonine 128, arginine 142, glutamine 223, threonine 238, and arginine 302. The active-site Proton donor is histidine 41. Residue 298–304 (ATTGRKR) participates in substrate binding. Residues arginine 304, 330–332 (KLD), and 412–414 (GTG) each bind GTP.

Belongs to the adenylosuccinate synthetase family. In terms of assembly, homodimer. Requires Mg(2+) as cofactor.

It is found in the cytoplasm. The enzyme catalyses IMP + L-aspartate + GTP = N(6)-(1,2-dicarboxyethyl)-AMP + GDP + phosphate + 2 H(+). The protein operates within purine metabolism; AMP biosynthesis via de novo pathway; AMP from IMP: step 1/2. Plays an important role in the de novo pathway of purine nucleotide biosynthesis. Catalyzes the first committed step in the biosynthesis of AMP from IMP. This chain is Adenylosuccinate synthetase, found in Tropheryma whipplei (strain TW08/27) (Whipple's bacillus).